A 41-amino-acid polypeptide reads, in one-letter code: M-factor (41 aa).

Residues Met-1–Lys-25 form a disordered region. The propeptide occupies Met-1–Asn-29. A Cysteine methyl ester modification is found at Cys-38. Cys-38 carries the S-farnesyl cysteine lipid modification. Residues Val-39–Ala-41 constitute a propeptide, removed in mature form.

The protein resides in the secreted. Functionally, M-factor is a mating pheromone produced by M-type mating cells. All three mfm genes contribute to the production of M-factor. This is M-factor (mfm3) from Schizosaccharomyces pombe (strain 972 / ATCC 24843) (Fission yeast).